The sequence spans 574 residues: Ankyrin repeat protein B19 (574 aa).

ANK repeat units lie at residues 56-87 (TGYT…DVTM), 135-164 (IKSR…DPNF), 167-213 (DGYT…NLNA), 217-249 (CGNT…NFEI), 253-285 (HGLT…NVGE), and 327-356 (EGKT…DINA). The region spanning 541–574 (NCLLTLLPSEIIYEILYMLTINDLYNISYPPTKV) is the F-box domain.

This sequence belongs to the poxvirinae B18 protein family.

This Vaccinia virus (strain Western Reserve) (VACV) protein is Ankyrin repeat protein B19.